The primary structure comprises 1416 residues: DNA-directed RNA polymerase subunit beta' (1416 aa).

Residues cysteine 68, cysteine 70, cysteine 83, and cysteine 86 each coordinate Zn(2+). The Mg(2+) site is built by aspartate 458, aspartate 460, and aspartate 462. The Zn(2+) site is built by cysteine 811, cysteine 884, cysteine 891, and cysteine 894.

The protein belongs to the RNA polymerase beta' chain family. The RNAP catalytic core consists of 2 alpha, 1 beta, 1 beta' and 1 omega subunit. When a sigma factor is associated with the core the holoenzyme is formed, which can initiate transcription. Mg(2+) is required as a cofactor. Requires Zn(2+) as cofactor.

It carries out the reaction RNA(n) + a ribonucleoside 5'-triphosphate = RNA(n+1) + diphosphate. DNA-dependent RNA polymerase catalyzes the transcription of DNA into RNA using the four ribonucleoside triphosphates as substrates. The chain is DNA-directed RNA polymerase subunit beta' from Francisella philomiragia subsp. philomiragia (strain ATCC 25017 / CCUG 19701 / FSC 153 / O#319-036).